The sequence spans 838 residues: Multiphosphoryl transfer protein (838 aa).

The 141-residue stretch at 7–147 (APVTPDLVRL…AVIVAALTGD (141 aa)) folds into the PTS EIIA type-2 domain. His67 (tele-phosphohistidine intermediate; for EIIA activity) is an active-site residue. The residue at position 67 (His67) is a Phosphohistidine; by HPr. Residues 161 to 253 (AERFEWTIAY…LTAQEKADAE (93 aa)) enclose the HPr domain. His175 functions as the Pros-phosphohistidine intermediate; for HPr activity in the catalytic mechanism. A Phosphohistidine; by EI modification is found at His175. A PTS EI region spans residues 274–838 (AIVGIGASPG…ALEAQREGQA (565 aa)). His460 (tele-phosphohistidine intermediate; for PTS EI activity) is an active-site residue. At His460 the chain carries Phosphohistidine; by autocatalysis. Phosphoenolpyruvate-binding residues include Arg567 and Arg603. Glu697 and Asp721 together coordinate Mg(2+). Residues 720-721 (ND) and Arg731 contribute to the phosphoenolpyruvate site. Cys768 functions as the Proton donor in the catalytic mechanism.

Belongs to the PEP-utilizing enzyme family. Requires Mg(2+) as cofactor.

Its subcellular location is the cytoplasm. It catalyses the reaction L-histidyl-[protein] + phosphoenolpyruvate = N(pros)-phospho-L-histidyl-[protein] + pyruvate. The phosphoenolpyruvate-dependent sugar phosphotransferase system (sugar PTS), a major carbohydrate active transport system, catalyzes the phosphorylation of incoming sugar substrates concomitantly with their translocation across the cell membrane. The enzyme II FruAB PTS system is involved in fructose transport. The chain is Multiphosphoryl transfer protein from Xanthomonas campestris pv. campestris (strain ATCC 33913 / DSM 3586 / NCPPB 528 / LMG 568 / P 25).